The primary structure comprises 37 residues: Large ribosomal subunit protein bL36c (37 aa).

It belongs to the bacterial ribosomal protein bL36 family.

It is found in the plastid. The polypeptide is Large ribosomal subunit protein bL36c (rpl36) (Euglena longa (Euglenophycean alga)).